The following is a 401-amino-acid chain: Mu-type opioid receptor (401 aa).

Residues 1-69 (MDSGAVPTNA…CPSAGSPSMI (69 aa)) are Extracellular-facing. N-linked (GlcNAc...) asparagine glycosylation is found at Asn-9, Asn-12, Asn-34, Asn-41, and Asn-49. The helical transmembrane segment at 70-94 (TAIIIMALYSIVCVVGLFGNFLVMY) threads the bilayer. The Cytoplasmic portion of the chain corresponds to 95–107 (VIVRYTKMKTATN). Residues 108–132 (IYIFNLALADALATSTLPFQSVNYL) traverse the membrane as a helical segment. The Extracellular segment spans residues 133 to 143 (MGTWPFGTILC). A disulfide bond links Cys-143 and Cys-220. Residues 144-166 (KIVISIDYYNMFTSIFTLCTMSV) traverse the membrane as a helical segment. The Cytoplasmic portion of the chain corresponds to 167–186 (DRYIAVCHPVKALDLRTPRN). Tyr-169 is modified (phosphotyrosine). The chain crosses the membrane as a helical span at residues 187-208 (AKIINICNWILSSAIGLPVMFM). The Extracellular segment spans residues 209–231 (ATTKYRQGSIDCTLTFSHPTWYW). A helical membrane pass occupies residues 232–256 (ENLLKICVFIFAFIMPILIITVCYG). At 257–280 (LMILRLKSVRMLSGSKEKDRNLRR) the chain is on the cytoplasmic side. A helical transmembrane segment spans residues 281-307 (ITRMVLVVVAVFIVCWTPIHIYVIIKA). The Extracellular portion of the chain corresponds to 308–315 (LITIPETT). Residues 316–339 (FQTVSWHFCIALGYTNSCLNPVLY) traverse the membrane as a helical segment. Residues 335–339 (NPVLY) carry the NPxxY; plays a role in stabilizing the activated conformation of the receptor motif. Over 340 to 401 (AFLDENFKRC…NLEAETTPLP (62 aa)) the chain is Cytoplasmic. Cys-354 carries the S-palmitoyl cysteine lipid modification. Residues 365–389 (NSTRIRQNTRDHPSTANTVDRTNHQ) are disordered. Residue Ser-366 is modified to Phosphoserine. Thr-373 is modified (phosphothreonine). Ser-378 carries the phosphoserine modification. Thr-397 is modified (phosphothreonine).

Belongs to the G-protein coupled receptor 1 family. Forms homooligomers and heterooligomers with other GPCRs, such as OPRD1, OPRK1, OPRL1, NPFFR2, ADRA2A, SSTR2, CNR1 and CCR5 (probably in dimeric forms). Interacts with heterotrimeric G proteins; interaction with a heterotrimeric complex containing GNAI1, GNB1 and GNG2 stabilizes the active conformation of the receptor and increases its affinity for endomorphin-2, the synthetic opioid peptide DAMGO and for morphinan agonists. Interacts with PPL; the interaction disrupts agonist-mediated G-protein activation. Interacts (via C-terminus) with DNAJB4 (via C-terminus). Interacts with calmodulin; the interaction inhibits the constitutive activity of OPRM1; it abolishes basal and attenuates agonist-stimulated G-protein coupling. Interacts with FLNA, PLD2, RANBP9 and WLS and GPM6A. Interacts with RTP4. Interacts with SYP and GNAS. Interacts with RGS9, RGS17, RGS20, RGS4, PPP1R9B and HINT1. Phosphorylated. Differentially phosphorylated in basal and agonist-induced conditions. Agonist-mediated phosphorylation modulates receptor internalization. Phosphorylated by GRK2 in a agonist-dependent manner. Phosphorylation at Tyr-169 requires receptor activation, is dependent on non-receptor protein tyrosine kinase Src and results in a decrease in agonist efficacy by reducing G-protein coupling efficiency. Phosphorylated on tyrosine residues; the phosphorylation is involved in agonist-induced G-protein-independent receptor down-regulation. Phosphorylation at Ser-378 is involved in G-protein-dependent but not beta-arrestin-dependent activation of the ERK pathway. Post-translationally, ubiquitinated. A basal ubiquitination seems not to be related to degradation. Ubiquitination is increased upon formation of OPRM1:OPRD1 oligomers leading to proteasomal degradation; the ubiquitination is diminished by RTP4.

The protein localises to the cell membrane. Its subcellular location is the cell projection. It localises to the axon. The protein resides in the perikaryon. It is found in the dendrite. The protein localises to the endosome. Receptor for endogenous opioids such as beta-endorphin and endomorphin. Receptor for natural and synthetic opioids including morphine, heroin, DAMGO, fentanyl, etorphine, buprenorphin and methadone. Also activated by enkephalin peptides, such as Met-enkephalin or Met-enkephalin-Arg-Phe, with higher affinity for Met-enkephalin-Arg-Phe. Agonist binding to the receptor induces coupling to an inactive GDP-bound heterotrimeric G-protein complex and subsequent exchange of GDP for GTP in the G-protein alpha subunit leading to dissociation of the G-protein complex with the free GTP-bound G-protein alpha and the G-protein beta-gamma dimer activating downstream cellular effectors. The agonist- and cell type-specific activity is predominantly coupled to pertussis toxin-sensitive G(i) and G(o) G alpha proteins, GNAI1, GNAI2, GNAI3 and GNAO1, and to a lesser extent to pertussis toxin-insensitive G alpha proteins GNAZ and GNA15. They mediate an array of downstream cellular responses, including inhibition of adenylate cyclase activity and both N-type and L-type calcium channels, activation of inward rectifying potassium channels, mitogen-activated protein kinase (MAPK), phospholipase C (PLC), phosphoinositide/protein kinase (PKC), phosphoinositide 3-kinase (PI3K) and regulation of NF-kappa-B. Also couples to adenylate cyclase stimulatory G alpha proteins. The selective temporal coupling to G-proteins and subsequent signaling can be regulated by RGSZ proteins, such as RGS9, RGS17 and RGS4. Phosphorylation by members of the GPRK subfamily of Ser/Thr protein kinases and association with beta-arrestins is involved in short-term receptor desensitization. Beta-arrestins associate with the GPRK-phosphorylated receptor and uncouple it from the G-protein thus terminating signal transduction. The phosphorylated receptor is internalized through endocytosis via clathrin-coated pits which involves beta-arrestins. The activation of the ERK pathway occurs either in a G-protein-dependent or a beta-arrestin-dependent manner and is regulated by agonist-specific receptor phosphorylation. Acts as a class A G-protein coupled receptor (GPCR) which dissociates from beta-arrestin at or near the plasma membrane and undergoes rapid recycling. Receptor down-regulation pathways are varying with the agonist and occur dependent or independent of G-protein coupling. Endogenous ligands induce rapid desensitization, endocytosis and recycling. Heterooligomerization with other GPCRs can modulate agonist binding, signaling and trafficking properties. Involved in neurogenesis. In Bos taurus (Bovine), this protein is Mu-type opioid receptor (OPRM1).